Reading from the N-terminus, the 158-residue chain is Ribosome maturation factor RimP (158 aa).

The protein belongs to the RimP family.

Its subcellular location is the cytoplasm. Required for maturation of 30S ribosomal subunits. This Pseudomonas putida (strain ATCC 47054 / DSM 6125 / CFBP 8728 / NCIMB 11950 / KT2440) protein is Ribosome maturation factor RimP.